The chain runs to 400 residues: NADH dehydrogenase-like protein MT1860 (400 aa).

Belongs to the NADH dehydrogenase family. FAD is required as a cofactor.

The polypeptide is NADH dehydrogenase-like protein MT1860 (Mycobacterium tuberculosis (strain CDC 1551 / Oshkosh)).